The chain runs to 212 residues: MTPGRFITLEGGEGVGKSTNVAFVCDWLSARGIEVVRTREPGGTPRAEAIRELLLDPAPQEPLDETAELLLMFAARAQHLAARIRPALARGAWVVCDRFTDATFAYQGGGRGLDETRIATLEALVQQGLQPDLTLLLDMPVEAAQRRVERRGIERDRFERERGAFFNAVRESYLARAAQAPTRFAVIDADRSLEAVQASIAAHLTERLASWS.

11-18 (GGEGVGKS) lines the ATP pocket.

The protein belongs to the thymidylate kinase family.

The enzyme catalyses dTMP + ATP = dTDP + ADP. Its function is as follows. Phosphorylation of dTMP to form dTDP in both de novo and salvage pathways of dTTP synthesis. This chain is Thymidylate kinase, found in Chromohalobacter salexigens (strain ATCC BAA-138 / DSM 3043 / CIP 106854 / NCIMB 13768 / 1H11).